We begin with the raw amino-acid sequence, 83 residues long: MEEERIYTIPLRDVTNKSPTTKRAPRAIRAIREFLKKHMKSDIVKLDNTINEKVWERSLNKIPAKVRVKVVKEGDVVKATLVE.

It belongs to the eukaryotic ribosomal protein eL31 family.

The polypeptide is Large ribosomal subunit protein eL31 (Methanococcus maripaludis (strain DSM 14266 / JCM 13030 / NBRC 101832 / S2 / LL)).